Reading from the N-terminus, the 202-residue chain is Nucleoside triphosphate pyrophosphatase (202 aa).

The active-site Proton acceptor is the D77.

It belongs to the Maf family. Requires a divalent metal cation as cofactor.

The protein localises to the cytoplasm. The enzyme catalyses a ribonucleoside 5'-triphosphate + H2O = a ribonucleoside 5'-phosphate + diphosphate + H(+). The catalysed reaction is a 2'-deoxyribonucleoside 5'-triphosphate + H2O = a 2'-deoxyribonucleoside 5'-phosphate + diphosphate + H(+). Its function is as follows. Nucleoside triphosphate pyrophosphatase. May have a dual role in cell division arrest and in preventing the incorporation of modified nucleotides into cellular nucleic acids. This chain is Nucleoside triphosphate pyrophosphatase, found in Rickettsia canadensis (strain McKiel).